A 177-amino-acid chain; its full sequence is MAKKQRNEIDWTDEEEEIIWVSKSEIKRDAEHLKKLGASLIELNSANLAKMPIDDTLREAIELAQRLRLEARRRQIQYIGKLLRNVDHEPIQEALDKVENRHNQQQALLHKLELIRDELIEQGDSAINPLVDEYPTLDRQHLRNLIRAAQKEKQANKPPKNYREIFQYLKSTIIEQN.

Belongs to the DarP family.

Its subcellular location is the cytoplasm. Its function is as follows. Member of a network of 50S ribosomal subunit biogenesis factors which assembles along the 30S-50S interface, preventing incorrect 23S rRNA structures from forming. Promotes peptidyl transferase center (PTC) maturation. The protein is Dual-action ribosomal maturation protein DarP of Glaesserella parasuis serovar 5 (strain SH0165) (Haemophilus parasuis).